A 67-amino-acid chain; its full sequence is Probable Sec-independent protein translocase protein TatE (67 aa).

Residues 4-21 (ISITKLLVVAALVVLLFG) traverse the membrane as a helical segment.

It belongs to the TatA/E family. TatE subfamily.

Its subcellular location is the cell inner membrane. Its function is as follows. Part of the twin-arginine translocation (Tat) system that transports large folded proteins containing a characteristic twin-arginine motif in their signal peptide across membranes. TatE shares overlapping functions with TatA. This Salmonella arizonae (strain ATCC BAA-731 / CDC346-86 / RSK2980) protein is Probable Sec-independent protein translocase protein TatE.